The primary structure comprises 127 residues: Small ribosomal subunit protein uS11 (127 aa).

The protein belongs to the universal ribosomal protein uS11 family. Part of the 30S ribosomal subunit. Interacts with proteins S7 and S18. Binds to IF-3.

Its function is as follows. Located on the platform of the 30S subunit, it bridges several disparate RNA helices of the 16S rRNA. Forms part of the Shine-Dalgarno cleft in the 70S ribosome. This chain is Small ribosomal subunit protein uS11, found in Chlorobaculum parvum (strain DSM 263 / NCIMB 8327) (Chlorobium vibrioforme subsp. thiosulfatophilum).